A 290-amino-acid polypeptide reads, in one-letter code: MSRLGNRAADWADDEEFDDPSALPAQQVTTNKDGTKTVVSYRFNDEGKKVKVTRRIKTTVVREHVNPQVAERRSWAKFGLEKGHAAGPSFDTTSVGENIVFRPSVNWRVQAAEAEKAGPEKGSIKDQLKDKKVKCRICSGEHFTARCPFKDTMAPVDETAAAGAEPGADDVPAAGGLGAGTSSYVPPHLRKGAAAGGERMAGKYEKDDLATLRVTNVSELAEESELRDLFERFGRVTRVFLARDRETQRAKGFAFISFADRTDAARACEKMDGFGYRHLILRVEFAKRAT.

Positions 1 to 34 (MSRLGNRAADWADDEEFDDPSALPAQQVTTNKDG) are disordered. The region spanning 210–288 (ATLRVTNVSE…LILRVEFAKR (79 aa)) is the RRM domain.

The protein belongs to the eIF-3 subunit G family. As to quaternary structure, component of the eukaryotic translation initiation factor 3 (eIF-3) complex.

It is found in the cytoplasm. RNA-binding component of the eukaryotic translation initiation factor 3 (eIF-3) complex, which is involved in protein synthesis of a specialized repertoire of mRNAs and, together with other initiation factors, stimulates binding of mRNA and methionyl-tRNAi to the 40S ribosome. The eIF-3 complex specifically targets and initiates translation of a subset of mRNAs involved in cell proliferation. This subunit can bind 18S rRNA. The polypeptide is Eukaryotic translation initiation factor 3 subunit G (tif35) (Aspergillus fumigatus (strain CBS 144.89 / FGSC A1163 / CEA10) (Neosartorya fumigata)).